We begin with the raw amino-acid sequence, 489 residues long: Protein-export membrane protein SecD (489 aa).

6 consecutive transmembrane segments (helical) span residues 17–37 (VLIVLVLVILSVLSIYAIPPA), 328–348 (FIQIVCIAAAILGLLAVAFMV), 356–376 (SIVVPMILVNLSEIIILLGIA), 384–404 (LASIAGLIAVIGTGIDQLVVI), 428–448 (LGIITVSASTTIFAMLPLALM), and 450–470 (LSTLKGFAIITILGVLIGVIF).

It belongs to the SecD/SecF family. SecD subfamily. Part of the protein translocation apparatus. Forms a complex with SecF.

Its subcellular location is the cell membrane. In terms of biological role, involved in protein export. The polypeptide is Protein-export membrane protein SecD (Methanolacinia petrolearia (strain DSM 11571 / OCM 486 / SEBR 4847) (Methanoplanus petrolearius)).